The sequence spans 526 residues: MLO-like protein 1 (526 aa).

The Extracellular segment spans residues 1–11; the sequence is MGHGGEGMSLE. Residues 12 to 32 form a helical membrane-spanning segment; that stretch reads FTPTWVVAGVCTVIVAISLAV. The Cytoplasmic segment spans residues 33 to 61; it reads ERLLHYFGTVLKKKKQKPLYEALQKVKEE. A helical membrane pass occupies residues 62 to 82; it reads LMLLGFISLLLTVFQGLISKF. Over 83 to 160 the chain is Extracellular; the sequence is CVKENVLMHM…LSLEALHHLH (78 aa). A helical transmembrane segment spans residues 161 to 181; it reads IFIFVLAISHVTFCVLTVIFG. Over 182–287 the chain is Cytoplasmic; the sequence is STRIHQWKKW…MRALEDDFKQ (106 aa). Transmembrane regions (helical) follow at residues 288 to 308 and 309 to 329; these read VVGI…LNVN and GWHT…AVGT. Topologically, residues 330–372 are cytoplasmic; that stretch reads KLEHVIAQLAHEVAEKHVAIEGDLVVKPSDEHFWFSKPQIVLY. Residues 373–393 form a helical membrane-spanning segment; the sequence is LIHFILFQNAFEIAFFFWIWV. The Extracellular segment spans residues 394 to 412; the sequence is TYGFDSCIMGQVRYIVPRL. The helical transmembrane segment at 413 to 433 threads the bilayer; the sequence is VIGVFIQVLCSYSTLPLYAIV. At 434 to 526 the chain is on the cytoplasmic side; the sequence is SQMGSSFKKA…NNEITPDHNN (93 aa). The tract at residues 447–468 is calmodulin-binding; it reads ENVQVGLVGWAQKVKQKRDLKA. The disordered stretch occupies residues 471–526; that stretch reads SNGDEGSSQAGPGPDSGSGSAPAAGPGAGFAGIQLSRVTRNNAGDTNNEITPDHNN. Residues 476-495 are compositionally biased toward low complexity; the sequence is GSSQAGPGPDSGSGSAPAAG. The segment covering 506-520 has biased composition (polar residues); it reads SRVTRNNAGDTNNEI.

Belongs to the MLO family.

The protein resides in the cell membrane. May be involved in modulation of pathogen defense and leaf cell death. Activity seems to be regulated by Ca(2+)-dependent calmodulin binding and seems not to require heterotrimeric G proteins. The polypeptide is MLO-like protein 1 (MLO1) (Arabidopsis thaliana (Mouse-ear cress)).